The chain runs to 687 residues: Adhesion G-protein coupled receptor G1 (687 aa).

The signal sequence occupies residues 1–25 (MTAQSLLQTTLFLLSLLFLVQGAHG). 26 to 33 (RGHREDFR) contributes to the heparin binding site. At 26–402 (RGHREDFRFC…VEVDAVHKHY (377 aa)) the chain is on the extracellular side. 2 disulfide bridges follow: Cys35/Cys91 and Cys121/Cys177. 3 N-linked (GlcNAc...) asparagine glycosylation sites follow: Asn39, Asn148, and Asn171. Residue 190–200 (LKHPQKASRRP) participates in heparin binding. The region spanning 224–395 (DTVSFEEDRI…AVLMVSSVEV (172 aa)) is the GAIN-B domain. N-linked (GlcNAc...) asparagine glycosylation is found at Asn234, Asn303, Asn324, and Asn341. Disulfide bonds link Cys346–Cys377 and Cys366–Cys379. The interval 346 to 395 (CVFWVEDPTLSSPGHWSSAGCETVRRETQTSCFCNHLTYFAVLMVSSVEV) is GPS. Positions 384–397 (YFAVLMVSSVEVDA) are stachel. A helical transmembrane segment spans residues 403 to 423 (LSLLSYVGCVVSALACIVTIA). The Cytoplasmic segment spans residues 424–442 (AYLCSRRKPRDYTIKVHMN). Residues 443-463 (LLLAVFLLDTSFLLSEPVALT) traverse the membrane as a helical segment. Residues 464-470 (GSEAGCR) lie on the Extracellular side of the membrane. A helical membrane pass occupies residues 471–491 (ASAIFLHFSLLACLSWMGLEG). Topologically, residues 492-512 (YNLYRLVVEVFGTYVPGYLLK) are cytoplasmic. Residues 513–533 (LSAMGWGFPIFLVTLVALVDV) form a helical membrane-spanning segment. Over 534 to 570 (DNYGPIILAVHRTPEGVIYPSMCWIRDSLVSYITNLG) the chain is Extracellular. Residues 571 to 591 (LFSLVFLFNMAMLATMVVQIL) form a helical membrane-spanning segment. Over 592-603 (RLRPHTQKWSHV) the chain is Cytoplasmic. The chain crosses the membrane as a helical span at residues 604-624 (LTLLGLSLVLGLPWALIFFSF). The Extracellular portion of the chain corresponds to 625-630 (ASGTFQ). A helical transmembrane segment spans residues 631 to 651 (LVVLYLFSIITSFQGFLIFIW). The Cytoplasmic portion of the chain corresponds to 652-687 (YWSMRLQARGGPSPLKSNSDSARLPISSGSTSSSRI). Residues 664-687 (SPLKSNSDSARLPISSGSTSSSRI) form a disordered region. Over residues 678 to 687 (SSGSTSSSRI) the composition is skewed to low complexity.

Belongs to the G-protein coupled receptor 2 family. LN-TM7 subfamily. In terms of assembly, heterodimer of 2 chains generated by proteolytic processing; the large extracellular N-terminal fragment (ADGRG1 NT) and the membrane-bound C-terminal fragment (ADGRG1-CT) predominantly remain associated and non-covalently linked. ADGRG1 NT self-associates in a trans-trans manner; the homophilic interaction enhances receptor signaling. Interacts with TGM2. Interacts with heparin; leading to the reduction of ADGRG1 shedding. Interacts with COL3A1. Part of a GPCR-tetraspanin complex at least consisting of ADGRG1, CD81, eventually CD9, and GNA11 in which CD81 is enhancing the association of ADGRG1 with GNA11. Autoproteolytically cleaved into 2 fragments; the large extracellular N-terminal fragment (ADGRG1 NT) and the membrane-bound C-terminal fragment (ADGRG1 CT) predominantly remain associated and non-covalently linked. Shedding to yield the secreted ADGRG1 N-terminal fragment seems to involve metalloprotease(s). Post-translationally, ubiquitinated. Undergoes polyubiquitination upon activation.

It is found in the cell membrane. It localises to the secreted. Its subcellular location is the membrane raft. Its activity is regulated as follows. Forms a heterodimer of 2 chains generated by proteolytic processing that remain associated through non-covalent interactions mediated by the GAIN-B domain. In the inactivated receptor, the Stachel sequence (also named stalk) is embedded in the GAIN-B domain, where it adopts a beta-strand conformation. On activation, the Stachel moves into the 7 transmembrane region and adopts a twisted hook-shaped configuration that forms contacts within the receptor, leading to coupling of a G-alpha protein, which activates signaling. The cleaved GAIN-B and N-terminal domains can then dissociate from the rest of the receptor. In terms of biological role, adhesion G-protein coupled receptor (aGPCR) for steroid hormone 17alpha-hydroxypregnenolone (17-OH), which is involved in cell adhesion and cell-cell interactions. Ligand binding causes a conformation change that triggers signaling via guanine nucleotide-binding proteins (G proteins) and modulates the activity of downstream effectors, such as RhoA pathway. ADGRG1 is coupled to G(12) and/or G(13) G proteins (GNA12 and GNA13, respectively) and mediates the activation Rho small GTPases. Acts as a potent suppressor of ferroptosis: binding to 17-OH-binding initiates signaling that down-regulates CD36 and alleviates ferroptosis-induced liver injury. Ligand-binding also induces cell adhesion activity via association with proteins such as collagen III/COL3A1 and TGM2. Mediates cell matrix adhesion in developing neurons and hematopoietic stem cells. Involved in cortical development, specifically in maintenance of the pial basement membrane integrity and in cortical lamination: association with COL3A1 in the developing brain inhibits neuronal migration via activation of the RhoA pathway. Together with TGM2, acts as a regulator of myelination and myelin repair in oligodendrocyte precursor cells. Acts as a hemostatic sensor of shear force: G protein-coupled receptor signaling is activated in response to shear force in platelets, promoting G(13) G protein signaling, and platelet shape change and aggregation in a COL3A1-dependent manner. Acts as an inhibitor of VEGFA production thereby inhibiting angiogenesis through a signaling pathway mediated by PRKCA. Plays a role in the maintenance of hematopoietic stem cells in bone marrow niche. Plays an essential role in testis development. In Gorilla gorilla gorilla (Western lowland gorilla), this protein is Adhesion G-protein coupled receptor G1 (ADGRG1).